The following is a 572-amino-acid chain: Proline--tRNA ligase (572 aa).

This sequence belongs to the class-II aminoacyl-tRNA synthetase family. ProS type 1 subfamily. In terms of assembly, homodimer.

The protein localises to the cytoplasm. The enzyme catalyses tRNA(Pro) + L-proline + ATP = L-prolyl-tRNA(Pro) + AMP + diphosphate. Functionally, catalyzes the attachment of proline to tRNA(Pro) in a two-step reaction: proline is first activated by ATP to form Pro-AMP and then transferred to the acceptor end of tRNA(Pro). As ProRS can inadvertently accommodate and process non-cognate amino acids such as alanine and cysteine, to avoid such errors it has two additional distinct editing activities against alanine. One activity is designated as 'pretransfer' editing and involves the tRNA(Pro)-independent hydrolysis of activated Ala-AMP. The other activity is designated 'posttransfer' editing and involves deacylation of mischarged Ala-tRNA(Pro). The misacylated Cys-tRNA(Pro) is not edited by ProRS. The polypeptide is Proline--tRNA ligase (Yersinia pestis bv. Antiqua (strain Antiqua)).